Consider the following 404-residue polypeptide: Lipase lipl-3 (404 aa).

The N-terminal stretch at 1–20 is a signal peptide; the sequence is MCSSLCALLLVILAVHNVHA. The N-linked (GlcNAc...) asparagine glycan is linked to Asn65. Ser168 serves as the catalytic Nucleophile. N-linked (GlcNAc...) asparagine glycosylation is present at Asn272. Active-site charge relay system residues include Asp344 and His376.

It belongs to the AB hydrolase superfamily. Lipase family.

It localises to the secreted. Its subcellular location is the lysosome lumen. Lipase that, together with lipl-1, plays a role in the response to nutrient deprivation by controlling lipid metabolism. Specifically, involved in the breakdown of lipids during lipophagy, a process during which lipids contained in lipid droplets that have been delivered to lysosomes by autophagy are degraded. The polypeptide is Lipase lipl-3 (Caenorhabditis elegans).